A 1063-amino-acid chain; its full sequence is MGFELDRFDGDVDPDLKCALCHKVLEDPLTTPCGHVFCAGCVLPWVVQEGSCPARCRGRLSAKELNHVLPLKRLILKLDIKCAHAARGCGRVVKLQDLPEHLERCDFAPARCRHAGCGQLLLRRDVEAHMRDACDARPVGRCQEGCGLPLTHGEQRAGGHCCARALRAHNGALQARLGALHKALKKEALRAGKREKSLVAQLAAAQLELQMTALRYQKKFTEYSARLDSLSRCVAAPPGGKGEETKSLTLVLHRDSGSLGFNIIGGRPCVDNQDGSSSEGIFVSKIVDSGPAAKEGGLQIHDRIIEVNGKDLSRATHDQAVEAFKTAKEPIVVQVLRRTPRTKMFTPASESQLVDTGTQTDITFEHIMALTKMSSPSPPVLDPYLLPEEHPASHDYYDPNDYMGDIHQDMDREELELEEVGLYRMNSQDKLGLTVCYRTDDEDDIGIYISEIDPNSIAAKDGRIREGDRIIQINGIEVQNREEAVALLTSEENKNFSLLIARPELQLDEGWMDDDRNDFLDDLHMDMLEEQHHQAMQFTASVLQQKKHEEDGGTTDTATILSNQHEKDSGVGRTDESTRNDESSEQENNGEDATASANPLAGQRKLTCSQDTLGSGDLPFSNESFISADCTDVDYLGIPEDECERFRELLELKCQVQSASPYSLYYPSSPLDAAGKSDPESVDKELELLNEELRSIELECLSIVRAHKMQQLKEQYRESWMLHHSGFRNYNTSVDVRRHELSDITELPEKSDKDSSSAYNTGESCRSTPLTLEISPDNSLRRVAEGSSEGATANIEAYRPSPKNLLAITEDPEVSTPSYNPSAKELDPSQALEIKERRGSDGSRSPTASPKLGNAYLPSYHHSPYKHAHIPAHAQHYQSYMHLIQQKSAVEYAQSQMSLVSMCKDLNSSNSVEPRMEWKVKIRSDGTRYITKRPVRDRLLRERALKIREERSGLTTDDDAMSEMKMGRYWSKEERKQHLVKAKEQRRRREFMMQSRLDCLKEQQASDDRKEMNILELSHKKMMKKRNKKIFDNWMTIQELLTHGTKSPDGTRVYNSFLSVTTV.

The RING-type; degenerate zinc finger occupies 18-56 (CALCHKVLEDPLTTPCGHVFCAGCVLPWVVQEGSCPARC). Residues 100–158 (EHLERCDFAPARCRHAGCGQLLLRRDVEAHMRDACDARPVGRCQEGCGLPLTHGEQRAG) form a TRAF-type zinc finger. PDZ domains are found at residues 249-339 (TLVL…LRRT) and 419-503 (EVGL…IARP). Position 427 is a phosphoserine (Ser427). The disordered stretch occupies residues 545-602 (QKKHEEDGGTTDTATILSNQHEKDSGVGRTDESTRNDESSEQENNGEDATASANPLAG). Over residues 554 to 563 (TTDTATILSN) the composition is skewed to polar residues. The span at 564 to 582 (QHEKDSGVGRTDESTRNDE) shows a compositional bias: basic and acidic residues. The stretch at 680–705 (ESVDKELELLNEELRSIELECLSIVR) forms a coiled coil. Residues 746-755 (ELPEKSDKDS) are compositionally biased toward basic and acidic residues. Disordered stretches follow at residues 746–798 (ELPE…IEAY) and 834–853 (IKER…PKLG). Over residues 756–770 (SSAYNTGESCRSTPL) the composition is skewed to polar residues.

In terms of assembly, interacts with NLGN1 and EFNB2. Interacts with UBE2D2 and with MUSK via the first PDZ domain. In myotubes, the interaction between PDZRN3 and MUSK is enhanced upon agrin stimulation. Post-translationally, auto-ubiquitinated. In terms of tissue distribution, highly expressed in skeletal and cardiac muscle and at lower levels in spinal cord and brain (at protein level). Also expressed in kidney and lung. In muscles, concentrated at the neuromuscular junction (NMJ).

The protein resides in the synapse. Its subcellular location is the cytoplasm. It catalyses the reaction S-ubiquitinyl-[E2 ubiquitin-conjugating enzyme]-L-cysteine + [acceptor protein]-L-lysine = [E2 ubiquitin-conjugating enzyme]-L-cysteine + N(6)-ubiquitinyl-[acceptor protein]-L-lysine.. The protein operates within protein modification; protein ubiquitination. E3 ubiquitin-protein ligase. Plays an important role in regulating the surface level of MUSK on myotubes. Mediates the ubiquitination of MUSK, promoting its endocytosis and lysosomal degradation. Might contribute to terminal myogenic differentiation. This chain is E3 ubiquitin-protein ligase PDZRN3 (Pdzrn3), found in Mus musculus (Mouse).